The sequence spans 333 residues: Phosphoribosylformylglycinamidine cyclo-ligase (333 aa).

Belongs to the AIR synthase family.

Its subcellular location is the cytoplasm. The catalysed reaction is 2-formamido-N(1)-(5-O-phospho-beta-D-ribosyl)acetamidine + ATP = 5-amino-1-(5-phospho-beta-D-ribosyl)imidazole + ADP + phosphate + H(+). It participates in purine metabolism; IMP biosynthesis via de novo pathway; 5-amino-1-(5-phospho-D-ribosyl)imidazole from N(2)-formyl-N(1)-(5-phospho-D-ribosyl)glycinamide: step 2/2. This Methanosarcina barkeri (strain Fusaro / DSM 804) protein is Phosphoribosylformylglycinamidine cyclo-ligase.